A 447-amino-acid polypeptide reads, in one-letter code: Tubulin beta-1 chain (447 aa).

Residues Gln-11, Glu-69, Ser-138, Gly-142, Thr-143, Gly-144, Asn-204, and Asn-226 each coordinate GTP. Glu-69 is a binding site for Mg(2+). Positions 427–447 (EATADEDAEFEEEQEAEVEEN) are disordered. The span at 429–447 (TADEDAEFEEEQEAEVEEN) shows a compositional bias: acidic residues.

It belongs to the tubulin family. As to quaternary structure, dimer of alpha and beta chains. A typical microtubule is a hollow water-filled tube with an outer diameter of 25 nm and an inner diameter of 15 nM. Alpha-beta heterodimers associate head-to-tail to form protofilaments running lengthwise along the microtubule wall with the beta-tubulin subunit facing the microtubule plus end conferring a structural polarity. Microtubules usually have 13 protofilaments but different protofilament numbers can be found in some organisms and specialized cells. It depends on Mg(2+) as a cofactor.

The protein resides in the cytoplasm. Its subcellular location is the cytoskeleton. Tubulin is the major constituent of microtubules, a cylinder consisting of laterally associated linear protofilaments composed of alpha- and beta-tubulin heterodimers. Microtubules grow by the addition of GTP-tubulin dimers to the microtubule end, where a stabilizing cap forms. Below the cap, tubulin dimers are in GDP-bound state, owing to GTPase activity of alpha-tubulin. This chain is Tubulin beta-1 chain, found in Glossina morsitans morsitans (Savannah tsetse fly).